Here is a 182-residue protein sequence, read N- to C-terminus: MEIKFTIKQVVAVGIGAALFVVIGMINIPTPVPNTSIQLQYAVQALLSIIFGPIIGLLVGLIGHAIKDSLAGYGLWWTWIIASGLFGLVVGLFRKYVRVINGVFDWKDILIFNLIQLLANALVWGVLAPLGDVVIYQEAAEKVFAQGIVAGIANGVSVAIAGTLLLLAYAGTQTRAGSLKKD.

Transmembrane regions (helical) follow at residues 10–30, 46–66, 73–93, 109–129, and 148–168; these read VVAV…NIPT, LLSI…GHAI, YGLW…VGLF, ILIF…VLAP, and IVAG…LLLA.

The protein belongs to the UPF0397 family.

The protein localises to the cell membrane. The sequence is that of UPF0397 protein SPP_0507 from Streptococcus pneumoniae (strain P1031).